Reading from the N-terminus, the 172-residue chain is Myosin regulatory light chain 12B (172 aa).

The segment covering 1-16 (MSSKKAKTKTTKKRPQ) has biased composition (basic residues). Positions 1–20 (MSSKKAKTKTTKKRPQRATS) are disordered. The residue at position 19 (threonine 19) is a Phosphothreonine; by MLCK and ZIPK/DAPK3. A Phosphoserine; by MLCK and ZIPK/DAPK3 modification is found at serine 20. EF-hand domains are found at residues 29–64 (SQIQ…LGKN), 98–133 (DPED…MGDR), and 134–169 (FTDE…GAKD). The Ca(2+) site is built by aspartate 42, asparagine 44, aspartate 46, and aspartate 53.

In terms of assembly, myosin is a hexamer of 2 heavy chains and 4 light chains: interacts with myosin heavy chain MYO19. Post-translationally, phosphorylation increases the actin-activated myosin ATPase activity and thereby regulates the contractile activity. It is required to generate the driving force in the migration of the cells but not necessary for localization of myosin-2 at the leading edge. Phosphorylation is reduced following epigallocatechin-3-O-gallate treatment.

In terms of biological role, myosin regulatory subunit that plays an important role in regulation of both smooth muscle and nonmuscle cell contractile activity via its phosphorylation. Phosphorylation triggers actin polymerization in vascular smooth muscle. Implicated in cytokinesis, receptor capping, and cell locomotion. The chain is Myosin regulatory light chain 12B (Myl12b) from Rattus norvegicus (Rat).